A 211-amino-acid polypeptide reads, in one-letter code: MRDDRIFIKGNKLGINAIINMDKFGNFDEMLDSLVEKLSRGKKFYKGATLTVTTDLKYINERQISKLKDVLFDEILIKDCIFEERLEKQSSVFSGVYEGRTKFVRKTVRSGQCLNYAGNLIIIGDVNNGGEVRAHGNVIVLGDLKGKVFAGDNGNENAIIAAYSLEPELISISGKITISPDDFEKTGYPEVARLNENNIIVEPYLPDKYSY.

This sequence belongs to the MinC family. As to quaternary structure, interacts with MinD and FtsZ.

Its function is as follows. Cell division inhibitor that blocks the formation of polar Z ring septums. Rapidly oscillates between the poles of the cell to destabilize FtsZ filaments that have formed before they mature into polar Z rings. Prevents FtsZ polymerization. The protein is Probable septum site-determining protein MinC of Clostridium perfringens (strain 13 / Type A).